Reading from the N-terminus, the 157-residue chain is Crossover junction endodeoxyribonuclease RuvC (157 aa).

Residues Asp-7, Glu-66, and Asp-139 contribute to the active site. Mg(2+) is bound by residues Asp-7, Glu-66, and Asp-139.

This sequence belongs to the RuvC family. In terms of assembly, homodimer which binds Holliday junction (HJ) DNA. The HJ becomes 2-fold symmetrical on binding to RuvC with unstacked arms; it has a different conformation from HJ DNA in complex with RuvA. In the full resolvosome a probable DNA-RuvA(4)-RuvB(12)-RuvC(2) complex forms which resolves the HJ. The cofactor is Mg(2+).

The protein resides in the cytoplasm. It carries out the reaction Endonucleolytic cleavage at a junction such as a reciprocal single-stranded crossover between two homologous DNA duplexes (Holliday junction).. In terms of biological role, the RuvA-RuvB-RuvC complex processes Holliday junction (HJ) DNA during genetic recombination and DNA repair. Endonuclease that resolves HJ intermediates. Cleaves cruciform DNA by making single-stranded nicks across the HJ at symmetrical positions within the homologous arms, yielding a 5'-phosphate and a 3'-hydroxyl group; requires a central core of homology in the junction. The consensus cleavage sequence is 5'-(A/T)TT(C/G)-3'. Cleavage occurs on the 3'-side of the TT dinucleotide at the point of strand exchange. HJ branch migration catalyzed by RuvA-RuvB allows RuvC to scan DNA until it finds its consensus sequence, where it cleaves and resolves the cruciform DNA. In Helicobacter pylori (strain ATCC 700392 / 26695) (Campylobacter pylori), this protein is Crossover junction endodeoxyribonuclease RuvC.